A 498-amino-acid chain; its full sequence is NADP-dependent glyceraldehyde-3-phosphate dehydrogenase (498 aa).

Substrate is bound by residues R118 and 171–172 (NY). NADP(+)-binding residues include K194, T197, and D232. 247 to 251 (GGDTG) contributes to the NAD(+) binding site. E266 serves as the catalytic Proton acceptor. 299–301 (RCT) contributes to the substrate binding site. Residue C300 is the Nucleophile of the active site. An NADP(+)-binding site is contributed by E393. R453 lines the substrate pocket.

This sequence belongs to the aldehyde dehydrogenase family.

Its subcellular location is the cytoplasm. The enzyme catalyses D-glyceraldehyde 3-phosphate + NADP(+) + H2O = (2R)-3-phosphoglycerate + NADPH + 2 H(+). Important as a means of generating NADPH for biosynthetic reactions. The sequence is that of NADP-dependent glyceraldehyde-3-phosphate dehydrogenase (GPN1) from Zea mays (Maize).